The chain runs to 916 residues: Protein translocase subunit SecA (916 aa).

Residues Q87, 105 to 109 (GEGKT), and D507 each bind ATP. Positions 900, 902, 911, and 912 each coordinate Zn(2+).

It belongs to the SecA family. As to quaternary structure, monomer and homodimer. Part of the essential Sec protein translocation apparatus which comprises SecA, SecYEG and auxiliary proteins SecDF-YajC and YidC. Requires Zn(2+) as cofactor.

The protein localises to the cell inner membrane. It localises to the cytoplasm. It catalyses the reaction ATP + H2O + cellular proteinSide 1 = ADP + phosphate + cellular proteinSide 2.. In terms of biological role, part of the Sec protein translocase complex. Interacts with the SecYEG preprotein conducting channel. Has a central role in coupling the hydrolysis of ATP to the transfer of proteins into and across the cell membrane, serving both as a receptor for the preprotein-SecB complex and as an ATP-driven molecular motor driving the stepwise translocation of polypeptide chains across the membrane. In Neisseria meningitidis serogroup A / serotype 4A (strain DSM 15465 / Z2491), this protein is Protein translocase subunit SecA.